The following is a 49-amino-acid chain: Glycolactin (49 aa).

It belongs to the pancreatic ribonuclease family. Glycosylated. Milk.

The protein resides in the secreted. Functionally, manifests poly C-specific RNase activity toward yeast tRNA, elicits a dose-dependent inhibition of cell-free translation, inhibits formation of superoxide ions in vitro and inhibits the hemagglutinating activities of soybean lectin and Ricinus communis agglutinin 120. Inhibits HIV-1 reverse transcriptase. This is Glycolactin from Bos taurus (Bovine).